Consider the following 495-residue polypeptide: Carotenoid 3,4-desaturase (495 aa).

Belongs to the carotenoid/retinoid oxidoreductase family.

The enzyme catalyses dihydroisopentenyldehydrorhodopin + A = isopentenyldehydrorhodopin + AH2. It catalyses the reaction dihydrobisanhydrobacterioruberin + A = bisanhydrobacterioruberin + AH2. It participates in carotenoid biosynthesis. Its function is as follows. Involved in the biosynthesis of the acyclic C50 carotenoid bacterioruberin (BR). CrtD is involved in the desaturation reactions that form double bonds at C-3,4 of dihydroisopentenyldehydrorhodopin (DH-IDR) and C-3',4' of dihydrobisanhydrobacterioruberin (DH-BABR) to yield isopentenyld ehydrorhodopin (IDR) and bisanhydrobacterioruberin (BABR), respectively. This chain is Carotenoid 3,4-desaturase, found in Haloarcula japonica (strain ATCC 49778 / DSM 6131 / JCM 7785 / NBRC 101032 / NCIMB 13157 / TR-1).